The primary structure comprises 250 residues: Probable ABC transporter permease protein BAB2_1148 (250 aa).

6 helical membrane passes run 12-32 (LLSF…GAVV), 63-83 (VLSG…LMGW), 94-114 (WVQF…IVTL), 122-142 (IFVI…QGVI), 172-192 (VPFI…TVVA), and 211-231 (LYYD…LGLF). Positions 56–236 (IFASLRRVLS…ILGLFMDRLL (181 aa)) constitute an ABC transmembrane type-1 domain.

It belongs to the binding-protein-dependent transport system permease family. As to quaternary structure, the complex is composed of two ATP-binding proteins (BAB2_1147), two transmembrane proteins (BAB2_1148) and a solute-binding protein (BAB2_1146).

The protein localises to the cell inner membrane. In terms of biological role, probably part of an ABC transporter complex. Probably responsible for the translocation of the substrate across the membrane. This Brucella abortus (strain 2308) protein is Probable ABC transporter permease protein BAB2_1148.